The following is a 129-amino-acid chain: Small ribosomal subunit protein uS11 (129 aa).

Belongs to the universal ribosomal protein uS11 family. Part of the 30S ribosomal subunit. Interacts with proteins S7 and S18. Binds to IF-3.

Located on the platform of the 30S subunit, it bridges several disparate RNA helices of the 16S rRNA. Forms part of the Shine-Dalgarno cleft in the 70S ribosome. The protein is Small ribosomal subunit protein uS11 of Enterococcus faecalis (strain ATCC 700802 / V583).